Here is a 414-residue protein sequence, read N- to C-terminus: Serine hydroxymethyltransferase (414 aa).

Residues Leu117 and 121-123 (GHL) contribute to the (6S)-5,6,7,8-tetrahydrofolate site. Lys226 bears the N6-(pyridoxal phosphate)lysine mark.

It belongs to the SHMT family. Homodimer. Requires pyridoxal 5'-phosphate as cofactor.

Its subcellular location is the cytoplasm. The catalysed reaction is (6R)-5,10-methylene-5,6,7,8-tetrahydrofolate + glycine + H2O = (6S)-5,6,7,8-tetrahydrofolate + L-serine. It functions in the pathway one-carbon metabolism; tetrahydrofolate interconversion. The protein operates within amino-acid biosynthesis; glycine biosynthesis; glycine from L-serine: step 1/1. Catalyzes the reversible interconversion of serine and glycine with tetrahydrofolate (THF) serving as the one-carbon carrier. This reaction serves as the major source of one-carbon groups required for the biosynthesis of purines, thymidylate, methionine, and other important biomolecules. Also exhibits THF-independent aldolase activity toward beta-hydroxyamino acids, producing glycine and aldehydes, via a retro-aldol mechanism. The chain is Serine hydroxymethyltransferase from Dictyoglomus turgidum (strain DSM 6724 / Z-1310).